We begin with the raw amino-acid sequence, 194 residues long: Ion-translocating oxidoreductase complex subunit A (194 aa).

Helical transmembrane passes span 4-24 (LVLI…QFLG), 39-59 (IGLA…SYLL), 72-92 (LRTI…EMLV), 102-122 (VLGI…VALL), 135-155 (GING…FAAM), and 172-192 (AIGL…SGLI).

Belongs to the NqrDE/RnfAE family. In terms of assembly, the complex is composed of six subunits: RnfA, RnfB, RnfC, RnfD, RnfE and RnfG.

Its subcellular location is the cell inner membrane. Functionally, part of a membrane-bound complex that couples electron transfer with translocation of ions across the membrane. The sequence is that of Ion-translocating oxidoreductase complex subunit A from Azotobacter vinelandii (strain DJ / ATCC BAA-1303).